Here is a 172-residue protein sequence, read N- to C-terminus: Adenine phosphoribosyltransferase (172 aa).

It belongs to the purine/pyrimidine phosphoribosyltransferase family. In terms of assembly, homodimer.

The protein localises to the cytoplasm. It carries out the reaction AMP + diphosphate = 5-phospho-alpha-D-ribose 1-diphosphate + adenine. Its pathway is purine metabolism; AMP biosynthesis via salvage pathway; AMP from adenine: step 1/1. Catalyzes a salvage reaction resulting in the formation of AMP, that is energically less costly than de novo synthesis. This chain is Adenine phosphoribosyltransferase, found in Clostridium novyi (strain NT).